We begin with the raw amino-acid sequence, 222 residues long: Recombination protein RecR (222 aa).

The C4-type zinc finger occupies 57 to 72 (CPVCFNITDAERCDVC). The 94-residue stretch at 80–173 (SVICVVEEPG…VVSRIAYGLP (94 aa)) folds into the Toprim domain. Positions 189 to 222 (ALSGRRRVSEPASPPPPRRNDEEQDGAPARPPSH) are disordered.

Belongs to the RecR family.

Its function is as follows. May play a role in DNA repair. It seems to be involved in an RecBC-independent recombinational process of DNA repair. It may act with RecF and RecO. The protein is Recombination protein RecR of Deinococcus geothermalis (strain DSM 11300 / CIP 105573 / AG-3a).